Reading from the N-terminus, the 325-residue chain is UDP-N-acetylglucosamine transporter (325 aa).

8 helical membrane passes run 8 to 24 (VSLGILVFQTTSLVLTM), 42 to 58 (AVVVAELLKIMACILLV), 138 to 154 (VYQWLSLVILMTGVAFV), 173 to 189 (FVGLMAVLTACFSSGFA), 209 to 225 (IQLGFFGSIFGLMGVYI), 246 to 262 (IVVVLQALGGLVIAAVI), 268 to 284 (ILKGFATSLSIILSTLI), and 295 to 311 (TSVFFLGAILVITATFL).

The protein belongs to the nucleotide-sugar transporter family. SLC35A subfamily. In terms of assembly, interacts with SLC35A2; the interaction is reduced in the presence of SLC35A4. Found in a complex with SLC35A2 and SLC35A4. Interacts with MGAT4B. Post-translationally, O-Glcnacylation regulates the stability of SLC35A3 and the specific complex formation with MGAT4B.

Its subcellular location is the golgi apparatus membrane. It carries out the reaction UMP(out) + UDP-N-acetyl-alpha-D-glucosamine(in) = UMP(in) + UDP-N-acetyl-alpha-D-glucosamine(out). In terms of biological role, transports diphosphate-N-acetylglucosamine (UDP-GlcNAc) from the cytosol into the lumen of the Golgi apparatus, functioning as an antiporter that exchanges UDP-N-acetyl-alpha-D-glucosamine for UMP. May supply UDP-GlcNAc as substrate for Golgi-resident glycosyltransferases that generate highly branched, multiantennary complex N-glycans and keratan sulfate. However, the exact role of SLC35A3 still needs to be elucidated, it could be a member of a catalytically more efficient multiprotein complex rather than function independently as a single transporter. This Homo sapiens (Human) protein is UDP-N-acetylglucosamine transporter (SLC35A3).